Here is a 64-residue protein sequence, read N- to C-terminus: MPKMKTHSGAKKRFKLTGTGKLKRQQANRRHYLEHKSSRLTRRLAGDKLVFKGDAKVIKKMLGV.

The tract at residues Met-1–His-31 is disordered.

This sequence belongs to the bacterial ribosomal protein bL35 family.

The chain is Large ribosomal subunit protein bL35 from Paenarthrobacter aurescens (strain TC1).